We begin with the raw amino-acid sequence, 439 residues long: Casein kinase I homolog 3 (439 aa).

The 272-residue stretch at 15–286 (YRVGKKIGEG…LRSLFDSLLL (272 aa)) folds into the Protein kinase domain. Residues 21-29 (IGEGSFGML) and Lys44 contribute to the ATP site. Asp134 (proton acceptor) is an active-site residue. The segment at 366–426 (DGIPGKAASP…PSKEKSRKKF (61 aa)) is disordered. Positions 372 to 413 (AASPQVQQQQQTSSAQQQQPQRVEQPAPQTTQPTQVDTQQAA) are enriched in low complexity.

Belongs to the protein kinase superfamily. CK1 Ser/Thr protein kinase family. Casein kinase I subfamily.

The protein resides in the cytoplasm. It catalyses the reaction L-seryl-[protein] + ATP = O-phospho-L-seryl-[protein] + ADP + H(+). The catalysed reaction is L-threonyl-[protein] + ATP = O-phospho-L-threonyl-[protein] + ADP + H(+). Functionally, casein kinases are operationally defined by their preferential utilization of acidic proteins such as caseins as substrates. This is Casein kinase I homolog 3 (cki3) from Schizosaccharomyces pombe (strain 972 / ATCC 24843) (Fission yeast).